The following is a 613-amino-acid chain: YTH domain-containing family protein 2 (613 aa).

Disordered stretches follow at residues 1–43 (MSAS…AQPR), 215–234 (SQVSTAPTMPPASMAPAKTA), and 244–396 (AKPQ…TVPA). Residues 2-397 (SASSLLEQRP…GMGGITVPAE (396 aa)) form a localization to mRNA processing bodies (P-bodies) region. The span at 16–27 (NKVQNGAVTQKD) shows a compositional bias: polar residues. Low complexity-rich tracts occupy residues 218–234 (STAPTMPPASMAPAKTA), 295–307 (NGQPPNQSSPQPG), and 345–360 (PPQLSQGPPASQPSQP). The tract at residues 398–613 (PHPVLEKLRM…RMQDRQGRVK (216 aa)) is interaction with m6A-containing mRNAs. Positions 423 to 557 (GRVFIIKSYS…DKARQVLKII (135 aa)) constitute a YTH domain. RNA is bound by residues 429-431 (KSY), D435, 445-446 (WC), N475, W499, and W504. Composition is skewed to basic and acidic residues over residues 578–587 (EEEESVKKVE) and 604–613 (RMQDRQGRVK). Residues 578–613 (EEEESVKKVEVQGSDPYSNNSSRSHYRMQDRQGRVK) are disordered.

The protein belongs to the YTHDF family. YTHDF2 subfamily.

The protein localises to the cytoplasm. It localises to the cytosol. The protein resides in the P-body. It is found in the stress granule. Its subcellular location is the nucleus. Specifically recognizes and binds N6-methyladenosine (m6A)-containing RNAs, and regulates their stability. M6A is a modification present at internal sites of mRNAs and some non-coding RNAs and plays a role in mRNA stability and processing. Acts as a regulator of mRNA stability by promoting degradation of m6A-containing mRNAs. The YTHDF paralogs (ythdf1, ythdf2 and ythdf3) share m6A-containing mRNAs targets and act redundantly to mediate mRNA degradation and cellular differentiation. Plays a key role in maternal-to-zygotic transition during early embryonic development, the process during which maternally inherited mRNAs are degraded: acts by binding m6A-containing maternal mRNAs and promoting their degradation. More than one-third of maternal mRNAs can be modified by m6A. Binding to m6A-containing mRNAs results in mRNA degradation. Also involved in hematopoietic stem cells specification by binding to m6A-containing mRNAs, such as notch1a, and promote their degradation. The decreased Notch signaling following notch1a degradation promotes endothelial to hematopoietic transition. Promotes formation of phase-separated membraneless compartments, such as P-bodies or stress granules, by undergoing liquid-liquid phase separation upon binding to mRNAs containing multiple m6A-modified residues: polymethylated mRNAs act as a multivalent scaffold for the binding of YTHDF proteins, juxtaposing their disordered regions and thereby leading to phase separation. The resulting mRNA-YTHDF complexes then partition into different endogenous phase-separated membraneless compartments, such as P-bodies, stress granules or neuronal RNA granules. This chain is YTH domain-containing family protein 2, found in Danio rerio (Zebrafish).